The following is a 274-amino-acid chain: MSLQEEIIAQLGVKPIIDPEEEIRKSVDFLKAYLKKHPFLKSYVLGISGGQDSTLAGRLAQLAVEEMRAETGDNSYRFIAVRLPYGVQVDEDDAQKALAFIQADVSLTVNIKESADAMTKAVEATGAKVSDFNKGNIKARSRMIAQYALAGSYSGAVIGTDHAAENVTAFFTKFGDGGADILPLYRLNKRQGKQLLAALGADPALYEKVPTADLEEEKPGIADEVALGVTYNEIDDYLEGKSVSAQAQETIESWWHKGQHKRHFPITVFDEFWR.

Position 46–53 (46–53 (GISGGQDS)) interacts with ATP. Asp52 is a Mg(2+) binding site. Residue Arg140 participates in deamido-NAD(+) binding. Thr160 lines the ATP pocket. A Mg(2+)-binding site is contributed by Glu165. Deamido-NAD(+)-binding residues include Lys173 and Asp180. Residues Lys189 and Thr211 each contribute to the ATP site. Deamido-NAD(+) is bound at residue 260–261 (HK).

It belongs to the NAD synthetase family. In terms of assembly, homodimer.

The catalysed reaction is deamido-NAD(+) + NH4(+) + ATP = AMP + diphosphate + NAD(+) + H(+). The protein operates within cofactor biosynthesis; NAD(+) biosynthesis; NAD(+) from deamido-NAD(+) (ammonia route): step 1/1. In terms of biological role, catalyzes the ATP-dependent amidation of deamido-NAD to form NAD. Uses ammonia as a nitrogen source. The polypeptide is NH(3)-dependent NAD(+) synthetase (Streptococcus sanguinis (strain SK36)).